A 139-amino-acid polypeptide reads, in one-letter code: Actin-depolymerizing factor (139 aa).

Residues 5–139 enclose the ADF-H domain; sequence SSGMAVDDEC…SMDIIKARAF (135 aa).

It belongs to the actin-binding proteins ADF family. Preferentially in mature anther.

Actin-depolymerizing protein. Severs actin filaments (F-actin) and binds to actin monomers. This chain is Actin-depolymerizing factor, found in Lilium longiflorum (Trumpet lily).